Consider the following 207-residue polypeptide: MARYIGPKAKLSRREGTDLFLKSARRSLADKCKLDSKPGQHGRTSGARTSDYGTQLREKQKVKRIYGVLERQFRRYFAEADRRKGNTGENLLQLLESRLDNVVYRMGFGSTRAEARQLVSHKSITVNGVVANVPSQQVKSGDVVAIREKAKKQARIVEALSLAEQGGMPSWVAVDAKKFEGTFKQMPERAEIAGDINESLIVELYSR.

A disordered region spans residues 31-55 (KCKLDSKPGQHGRTSGARTSDYGTQ). Residues 42 to 53 (GRTSGARTSDYG) show a composition bias toward polar residues. Residues 97-160 (SRLDNVVYRM…KKQARIVEAL (64 aa)) form the S4 RNA-binding domain.

The protein belongs to the universal ribosomal protein uS4 family. As to quaternary structure, part of the 30S ribosomal subunit. Contacts protein S5. The interaction surface between S4 and S5 is involved in control of translational fidelity.

One of the primary rRNA binding proteins, it binds directly to 16S rRNA where it nucleates assembly of the body of the 30S subunit. Functionally, with S5 and S12 plays an important role in translational accuracy. This chain is Small ribosomal subunit protein uS4, found in Burkholderia lata (strain ATCC 17760 / DSM 23089 / LMG 22485 / NCIMB 9086 / R18194 / 383).